A 210-amino-acid chain; its full sequence is Ribosomal RNA large subunit methyltransferase E (210 aa).

S-adenosyl-L-methionine is bound by residues Gly-61, Trp-63, Asp-81, Asp-97, and Asp-122. The active-site Proton acceptor is Lys-162.

This sequence belongs to the class I-like SAM-binding methyltransferase superfamily. RNA methyltransferase RlmE family.

Its subcellular location is the cytoplasm. It catalyses the reaction uridine(2552) in 23S rRNA + S-adenosyl-L-methionine = 2'-O-methyluridine(2552) in 23S rRNA + S-adenosyl-L-homocysteine + H(+). Specifically methylates the uridine in position 2552 of 23S rRNA at the 2'-O position of the ribose in the fully assembled 50S ribosomal subunit. In Xanthomonas campestris pv. campestris (strain 8004), this protein is Ribosomal RNA large subunit methyltransferase E.